A 322-amino-acid polypeptide reads, in one-letter code: Homeobox protein DBX1-B (322 aa).

Positions 179–238 (GMLRRAVFSDVQRKALEKMFQKQKYISKPDRKKLATKLGLKDSQVKIWFQNRRMKWRNSK) form a DNA-binding region, homeobox. 2 disordered regions span residues 238–266 (KERELLSSGGCREQTLPTKMNPNPDLSDV) and 296–322 (DLHFKSPSISSKHSDFSESEDEEITVS). The span at 312–322 (SESEDEEITVS) shows a compositional bias: acidic residues.

It belongs to the H2.0 homeobox family.

It localises to the nucleus. This is Homeobox protein DBX1-B (dbx1b) from Danio rerio (Zebrafish).